The following is a 177-amino-acid chain: MLNDASNKENANSDVAADAAARPEQTVLLGLDYGVKKMGMALGNTVTQDARPFDILAMNNGQPADWDNLLGIIDTWRIGRVVVGLPLNMDGSSSMIAKRAHKFARRLAHRLMEQRIHVPVQLFDERLTSVEAREMAWELGLIKNERDPIDDISACLLLQSYLANPDHAEDIATYKAD.

This sequence belongs to the YqgF nuclease family.

Its subcellular location is the cytoplasm. Could be a nuclease involved in processing of the 5'-end of pre-16S rRNA. The polypeptide is Putative pre-16S rRNA nuclease (Psychrobacter sp. (strain PRwf-1)).